Reading from the N-terminus, the 233-residue chain is MYRVPIHEWDESDQPREKLLTHGPTVLSDAEVLALLLGSGTRTSDGPVSAVELGRALLQSYGSLHEVSQRKPKELTRTRGVGPAKATKLAAAFEAGRRVESQRQQDERMQVTCPADVADVYGPLLRDLDKEVFKVVHLNTANVIIGDYTVSEGGLSSSVVEPRGVFEQAILDDAAAVICLHNHPSGNPEPSREDIRITRQLAEAGGTMGIPVHDHLIIAGTKHTSLAERGVID.

The 123-residue stretch at 110 to 232 (QVTCPADVAD…HTSLAERGVI (123 aa)) folds into the MPN domain. 3 residues coordinate Zn(2+): H181, H183, and D194. The JAMM motif motif lies at 181–194 (HNHPSGNPEPSRED).

The protein belongs to the UPF0758 family.

This Salinibacter ruber (strain DSM 13855 / M31) protein is UPF0758 protein SRU_2338.